Reading from the N-terminus, the 197-residue chain is Thymidine kinase (197 aa).

ATP is bound by residues 9-16 (AAMNAGKS) and 83-86 (DESQ). The Proton acceptor role is filled by Glu-84. The Zn(2+) site is built by Cys-141, Cys-143, Cys-178, and Cys-181.

The protein belongs to the thymidine kinase family. In terms of assembly, homotetramer.

The protein resides in the cytoplasm. It carries out the reaction thymidine + ATP = dTMP + ADP + H(+). The chain is Thymidine kinase from Albidiferax ferrireducens (strain ATCC BAA-621 / DSM 15236 / T118) (Rhodoferax ferrireducens).